The following is a 100-amino-acid chain: Urease subunit gamma (100 aa).

It belongs to the urease gamma subunit family. In terms of assembly, heterotrimer of UreA (gamma), UreB (beta) and UreC (alpha) subunits. Three heterotrimers associate to form the active enzyme.

Its subcellular location is the cytoplasm. The enzyme catalyses urea + 2 H2O + H(+) = hydrogencarbonate + 2 NH4(+). The protein operates within nitrogen metabolism; urea degradation; CO(2) and NH(3) from urea (urease route): step 1/1. The polypeptide is Urease subunit gamma (Blochmanniella floridana).